The following is a 429-amino-acid chain: Enolase 1 (429 aa).

Q163 provides a ligand contact to (2R)-2-phosphoglycerate. The active-site Proton donor is the E205. Mg(2+) is bound by residues D242, E287, and D314. Residues K339, R368, S369, and K390 each contribute to the (2R)-2-phosphoglycerate site. Residue K339 is the Proton acceptor of the active site.

It belongs to the enolase family. It depends on Mg(2+) as a cofactor.

The protein resides in the cytoplasm. It localises to the secreted. The protein localises to the cell surface. The enzyme catalyses (2R)-2-phosphoglycerate = phosphoenolpyruvate + H2O. It functions in the pathway carbohydrate degradation; glycolysis; pyruvate from D-glyceraldehyde 3-phosphate: step 4/5. Functionally, catalyzes the reversible conversion of 2-phosphoglycerate (2-PG) into phosphoenolpyruvate (PEP). It is essential for the degradation of carbohydrates via glycolysis. This is Enolase 1 from Cupriavidus metallidurans (strain ATCC 43123 / DSM 2839 / NBRC 102507 / CH34) (Ralstonia metallidurans).